The sequence spans 446 residues: MPKEKNHLNLVVIGHVDSGKSTSTGHLIYKCGGIDKRTIEKFEKEAAEMGKGSFKYAWVLDKLKAERERGITIDIALWNFETAKSVFTIIDAPGHRDFIKNMITGTSQADAAILIIASGQGEFEAGISKEGQTREHALLAFTMGVKQMIVAVNKMDDKSVNWDQGRFIEIKKELSDYLKKIWLQPRQDPFIPISGWHGDNMLEKSPNMPWFTGSTLIDALDALDQPKRPKDKPLRLPLQDVYKIGGIGTVPVGRVETGLLKPGMVLTFAPMNITTECKSVEMHHESLTEAEPGDNVGFTVKNLSVKDLRRGYVASDSKNDPAKDTTNFLAQVIVLNHPGQIQKGYAPVLDCHTAHIACKFDEIESKVDRRSGKVLEEEPKFIKSGEAALVRMVPQKPMCVEAFNQYPPLGRFAVRDMKQTVAVGVIKEVVKKEQKGMVTKAAQKKK.

The tr-type G domain maps to 5 to 230; sequence KNHLNLVVIG…DALDQPKRPK (226 aa). Residues 14–21 form a G1 region; it reads GHVDSGKS. Residue 14 to 21 coordinates GTP; the sequence is GHVDSGKS. A G2 region spans residues 70–74; that stretch reads GITID. Residues 91-94 are G3; the sequence is DAPG. GTP-binding positions include 91-95 and 153-156; these read DAPGH and NKMD. Positions 153 to 156 are G4; it reads NKMD. Residues 194–196 form a G5 region; sequence SGW.

This sequence belongs to the TRAFAC class translation factor GTPase superfamily. Classic translation factor GTPase family. EF-Tu/EF-1A subfamily.

It localises to the cytoplasm. Its function is as follows. This protein promotes the GTP-dependent binding of aminoacyl-tRNA to the A-site of ribosomes during protein biosynthesis. The sequence is that of Elongation factor 1-alpha (EFAA) from Stylonychia lemnae (Ciliate).